A 398-amino-acid chain; its full sequence is 1-deoxy-D-xylulose 5-phosphate reductoisomerase (398 aa).

8 residues coordinate NADPH: Thr10, Gly11, Ser12, Ile13, Gly36, Lys37, Asn38, and Asn124. Position 125 (Lys125) interacts with 1-deoxy-D-xylulose 5-phosphate. NADPH is bound at residue Glu126. Asp150 provides a ligand contact to Mn(2+). 1-deoxy-D-xylulose 5-phosphate contacts are provided by Ser151, Glu152, Ser186, and His209. Residue Glu152 participates in Mn(2+) binding. Gly215 contacts NADPH. Positions 222, 227, 228, and 231 each coordinate 1-deoxy-D-xylulose 5-phosphate. A Mn(2+)-binding site is contributed by Glu231.

Belongs to the DXR family. As to quaternary structure, homodimer. Mg(2+) is required as a cofactor. It depends on Mn(2+) as a cofactor. Requires Co(2+) as cofactor.

It carries out the reaction 2-C-methyl-D-erythritol 4-phosphate + NADP(+) = 1-deoxy-D-xylulose 5-phosphate + NADPH + H(+). Its pathway is isoprenoid biosynthesis; isopentenyl diphosphate biosynthesis via DXP pathway; isopentenyl diphosphate from 1-deoxy-D-xylulose 5-phosphate: step 1/6. Its activity is regulated as follows. Inhibited by fosmidomycin. Catalyzes the NADPH-dependent rearrangement and reduction of 1-deoxy-D-xylulose-5-phosphate (DXP) to 2-C-methyl-D-erythritol 4-phosphate (MEP). This Escherichia coli (strain K12) protein is 1-deoxy-D-xylulose 5-phosphate reductoisomerase (dxr).